The primary structure comprises 547 residues: Glucose-6-phosphate isomerase 2 (547 aa).

The Proton donor role is filled by glutamate 351. Catalysis depends on residues histidine 382 and lysine 508.

The protein belongs to the GPI family.

Its subcellular location is the cytoplasm. It carries out the reaction alpha-D-glucose 6-phosphate = beta-D-fructose 6-phosphate. The protein operates within carbohydrate biosynthesis; gluconeogenesis. It participates in carbohydrate degradation; glycolysis; D-glyceraldehyde 3-phosphate and glycerone phosphate from D-glucose: step 2/4. Catalyzes the reversible isomerization of glucose-6-phosphate to fructose-6-phosphate. The chain is Glucose-6-phosphate isomerase 2 from Neisseria meningitidis serogroup B (strain ATCC BAA-335 / MC58).